The chain runs to 351 residues: Phospho-N-acetylmuramoyl-pentapeptide-transferase (351 aa).

Helical transmembrane passes span 3–23 (GIIA…PPLI), 51–71 (TMGG…AHAV), 76–96 (PTVS…VGFL), 113–133 (GAKM…VTMF), 152–172 (FGPP…IVAT), 181–201 (GLDG…VIIG), 223–243 (PLDL…FLWF), 250–270 (IFMG…LAIT), 275–295 (LLLL…IIQV), and 329–349 (FWII…LEWM).

This sequence belongs to the glycosyltransferase 4 family. MraY subfamily. It depends on Mg(2+) as a cofactor.

It localises to the cell membrane. It carries out the reaction UDP-N-acetyl-alpha-D-muramoyl-L-alanyl-gamma-D-glutamyl-meso-2,6-diaminopimeloyl-D-alanyl-D-alanine + di-trans,octa-cis-undecaprenyl phosphate = di-trans,octa-cis-undecaprenyl diphospho-N-acetyl-alpha-D-muramoyl-L-alanyl-D-glutamyl-meso-2,6-diaminopimeloyl-D-alanyl-D-alanine + UMP. Its pathway is cell wall biogenesis; peptidoglycan biosynthesis. In terms of biological role, catalyzes the initial step of the lipid cycle reactions in the biosynthesis of the cell wall peptidoglycan: transfers peptidoglycan precursor phospho-MurNAc-pentapeptide from UDP-MurNAc-pentapeptide onto the lipid carrier undecaprenyl phosphate, yielding undecaprenyl-pyrophosphoryl-MurNAc-pentapeptide, known as lipid I. This is Phospho-N-acetylmuramoyl-pentapeptide-transferase from Thermobifida fusca (strain YX).